The primary structure comprises 410 residues: Polyprenol-phosphate-mannose-dependent alpha-(1-2)-phosphatidylinositol pentamannoside mannosyltransferase (410 aa).

10 helical membrane-spanning segments follow: residues 31-51 (LAPM…YLVP), 96-116 (FAAI…AFIW), 160-180 (TFDY…AVST), 188-208 (LLVG…LYFL), 214-234 (AAVA…WLVV), 276-296 (GFGP…LLAW), 306-326 (LGGI…SWTH), 328-348 (WVWL…ALRG), 351-371 (ILGW…LSFA), and 384-404 (LAWA…WIAF).

This sequence belongs to the glycosyltransferase 87 family.

It is found in the cell membrane. It functions in the pathway phospholipid metabolism; phosphatidylinositol metabolism. Its function is as follows. Catalyzes the alpha-1,2 addition of a mannose residue from polyprenol-phosphate-mannose (PPM) to a monoacyl phosphatidylinositol tetramannoside (AcPIM4) to generate a monoacyl phosphatidylinositol pentamannoside (AcPIM5). This chain is Polyprenol-phosphate-mannose-dependent alpha-(1-2)-phosphatidylinositol pentamannoside mannosyltransferase, found in Mycolicibacterium smegmatis (strain ATCC 700084 / mc(2)155) (Mycobacterium smegmatis).